Reading from the N-terminus, the 467-residue chain is UDP-N-acetylmuramate--L-alanine ligase (467 aa).

114–120 (GTHGKTT) contributes to the ATP binding site.

This sequence belongs to the MurCDEF family.

The protein resides in the cytoplasm. It carries out the reaction UDP-N-acetyl-alpha-D-muramate + L-alanine + ATP = UDP-N-acetyl-alpha-D-muramoyl-L-alanine + ADP + phosphate + H(+). Its pathway is cell wall biogenesis; peptidoglycan biosynthesis. In terms of biological role, cell wall formation. This is UDP-N-acetylmuramate--L-alanine ligase from Nitrobacter hamburgensis (strain DSM 10229 / NCIMB 13809 / X14).